Consider the following 880-residue polypeptide: Translation initiation factor IF-2 (880 aa).

The tract at residues 1 to 251 is disordered; sequence MVDTKNPGDK…PTAKPAPAKQ (251 aa). Residues 58-79 are compositionally biased toward low complexity; that stretch reads PADAPAAPAPVAAAKPAPVRAP. Over residues 115–183 the composition is skewed to basic and acidic residues; the sequence is ARIRDEEERK…KRFGEEEAKK (69 aa). Low complexity-rich tracts occupy residues 184–215 and 233–250; these read AAAA…VAAD and AARP…APAK. The tr-type G domain maps to 376–547; the sequence is PRSPVVTVMG…ALQAELLDLK (172 aa). The segment at 385 to 392 is G1; sequence GHVDHGKT. 385-392 contacts GTP; it reads GHVDHGKT. The interval 410–414 is G2; it reads GITQH. A G3 region spans residues 433–436; sequence DTPG. GTP is bound by residues 433–437 and 487–490; these read DTPGH and NKID. A G4 region spans residues 487–490; sequence NKID. A G5 region spans residues 523–525; sequence SAK.

This sequence belongs to the TRAFAC class translation factor GTPase superfamily. Classic translation factor GTPase family. IF-2 subfamily.

It localises to the cytoplasm. In terms of biological role, one of the essential components for the initiation of protein synthesis. Protects formylmethionyl-tRNA from spontaneous hydrolysis and promotes its binding to the 30S ribosomal subunits. Also involved in the hydrolysis of GTP during the formation of the 70S ribosomal complex. The chain is Translation initiation factor IF-2 from Rhodopseudomonas palustris (strain BisB18).